The following is a 490-amino-acid chain: Bifunctional protein HldE (490 aa).

Residues 1-330 (MFDFDDLSQA…RKILPHAYRA (330 aa)) form a ribokinase region. An ATP-binding site is contributed by 205–208 (NRKE). D275 is an active-site residue. Residues 358-490 (FTNGCFDILH…LVDRARSDQR (133 aa)) form a cytidylyltransferase region.

It in the N-terminal section; belongs to the carbohydrate kinase PfkB family. The protein in the C-terminal section; belongs to the cytidylyltransferase family. Homodimer.

It carries out the reaction D-glycero-beta-D-manno-heptose 7-phosphate + ATP = D-glycero-beta-D-manno-heptose 1,7-bisphosphate + ADP + H(+). It catalyses the reaction D-glycero-beta-D-manno-heptose 1-phosphate + ATP + H(+) = ADP-D-glycero-beta-D-manno-heptose + diphosphate. The protein operates within nucleotide-sugar biosynthesis; ADP-L-glycero-beta-D-manno-heptose biosynthesis; ADP-L-glycero-beta-D-manno-heptose from D-glycero-beta-D-manno-heptose 7-phosphate: step 1/4. It participates in nucleotide-sugar biosynthesis; ADP-L-glycero-beta-D-manno-heptose biosynthesis; ADP-L-glycero-beta-D-manno-heptose from D-glycero-beta-D-manno-heptose 7-phosphate: step 3/4. In terms of biological role, catalyzes the phosphorylation of D-glycero-D-manno-heptose 7-phosphate at the C-1 position to selectively form D-glycero-beta-D-manno-heptose-1,7-bisphosphate. Catalyzes the ADP transfer from ATP to D-glycero-beta-D-manno-heptose 1-phosphate, yielding ADP-D-glycero-beta-D-manno-heptose. This chain is Bifunctional protein HldE, found in Bradyrhizobium sp. (strain ORS 278).